We begin with the raw amino-acid sequence, 449 residues long: Phosphoglucosamine mutase (449 aa).

The Phosphoserine intermediate role is filled by Ser101. Residues Ser101, Asp241, Asp243, and Asp245 each coordinate Mg(2+). Ser101 bears the Phosphoserine mark.

It belongs to the phosphohexose mutase family. Requires Mg(2+) as cofactor. Activated by phosphorylation.

The enzyme catalyses alpha-D-glucosamine 1-phosphate = D-glucosamine 6-phosphate. Functionally, catalyzes the conversion of glucosamine-6-phosphate to glucosamine-1-phosphate. This Ruminiclostridium cellulolyticum (strain ATCC 35319 / DSM 5812 / JCM 6584 / H10) (Clostridium cellulolyticum) protein is Phosphoglucosamine mutase.